The primary structure comprises 207 residues: Superoxide dismutase [Mn] (207 aa).

Mn(2+) is bound by residues histidine 27, histidine 82, aspartate 169, and histidine 173.

Belongs to the iron/manganese superoxide dismutase family. Mn(2+) serves as cofactor.

It catalyses the reaction 2 superoxide + 2 H(+) = H2O2 + O2. Destroys superoxide anion radicals which are normally produced within the cells and which are toxic to biological systems. In Yersinia enterocolitica, this protein is Superoxide dismutase [Mn] (sodA).